The primary structure comprises 778 residues: NAD-dependent deacetylase sir2B (778 aa).

ANK repeat units follow at residues 83 to 112 (LNWT…EISI), 114 to 142 (RYTA…VPNG), 148 to 178 (DMET…SMNS), 191 to 221 (HGVS…DINS), 225 to 255 (DNST…ELMN), 260 to 289 (YGNS…KIII), 317 to 354 (DGST…QVNG), 358 to 390 (GNAT…DPTI), and 394 to 423 (YGWT…LTNS). The segment at 438 to 458 (SSTSTSSSSSSSSSSSSSSSS) is disordered. In terms of domain architecture, Deacetylase sirtuin-type spans 465-778 (KEELKLKGIE…DYFNTLFNSF (314 aa)). Residue histidine 608 is the Proton acceptor of the active site. Zn(2+)-binding residues include cysteine 616, cysteine 619, cysteine 642, and cysteine 647. Residues 727 to 746 (KLKQQQENESGESSNDNDNN) are disordered. The segment covering 733 to 746 (ENESGESSNDNDNN) has biased composition (low complexity).

The protein belongs to the sirtuin family. Zn(2+) serves as cofactor.

The catalysed reaction is N(6)-acetyl-L-lysyl-[protein] + NAD(+) + H2O = 2''-O-acetyl-ADP-D-ribose + nicotinamide + L-lysyl-[protein]. In terms of biological role, NAD-dependent deacetylase, which plays an important role in the regulation of transcriptional repression. The chain is NAD-dependent deacetylase sir2B (sir2B) from Dictyostelium discoideum (Social amoeba).